Reading from the N-terminus, the 232-residue chain is Orotidine 5'-phosphate decarboxylase (232 aa).

Substrate-binding positions include Asp-11, Lys-32, 59–68, Thr-116, Arg-178, Gln-188, Gly-208, and Arg-209; that span reads DLKLHDIPHT. Lys-61 (proton donor) is an active-site residue.

It belongs to the OMP decarboxylase family. Type 1 subfamily. Homodimer.

The enzyme catalyses orotidine 5'-phosphate + H(+) = UMP + CO2. It participates in pyrimidine metabolism; UMP biosynthesis via de novo pathway; UMP from orotate: step 2/2. Functionally, catalyzes the decarboxylation of orotidine 5'-monophosphate (OMP) to uridine 5'-monophosphate (UMP). The sequence is that of Orotidine 5'-phosphate decarboxylase from Synechococcus sp. (strain JA-3-3Ab) (Cyanobacteria bacterium Yellowstone A-Prime).